Here is a 245-residue protein sequence, read N- to C-terminus: Carboxy-S-adenosyl-L-methionine synthase (245 aa).

S-adenosyl-L-methionine-binding positions include tyrosine 39, 64–66 (GSS), 117–118 (DI), and arginine 199.

The protein belongs to the class I-like SAM-binding methyltransferase superfamily. Cx-SAM synthase family. Homodimer.

It carries out the reaction prephenate + S-adenosyl-L-methionine = carboxy-S-adenosyl-L-methionine + 3-phenylpyruvate + H2O. Its function is as follows. Catalyzes the conversion of S-adenosyl-L-methionine (SAM) to carboxy-S-adenosyl-L-methionine (Cx-SAM). The sequence is that of Carboxy-S-adenosyl-L-methionine synthase from Desulfotalea psychrophila (strain LSv54 / DSM 12343).